The chain runs to 160 residues: Serine-protein kinase RsbW (160 aa).

Belongs to the anti-sigma-factor family.

It carries out the reaction L-seryl-[protein] + ATP = O-phospho-L-seryl-[protein] + ADP + H(+). The catalysed reaction is L-threonyl-[protein] + ATP = O-phospho-L-threonyl-[protein] + ADP + H(+). Its function is as follows. Negative regulator of sigma-B activity. Phosphorylates and inactivates its specific antagonist protein, RsbV. Upon phosphorylation of RsbV, RsbW is released and binds to sigma-B, thereby blocking its ability to form an RNA polymerase holoenzyme (E-sigma-B). This chain is Serine-protein kinase RsbW, found in Bacillus cereus (strain ATCC 10987 / NRS 248).